We begin with the raw amino-acid sequence, 359 residues long: MKKYLALALIAPLLISCSTTKKGDTYNEAWVKDTNGFDILMGQFAHNIENIWGFKEVVIAGPKDYVKYTDQYQTRSHINFDDGTITIETIAGTEPAAHLRRAIIKTLLMGDDPSSVDLYSDVDDITISKEPFLYGQVVDNTGQPIRWEGRASNFADYLLKNRLKSRSNGMRIIYSVTINMVPNHLDKRAHKYLGMVRQASRKYGVDESLILAIMQTESSFNPYAVSRSDALGLMQVVQHTAGKDVFRSQGKSGTPSRSFLFDPASNIDTGTAYLAMLNNVYLGGIDNPTSRRYAVITAYNGGAGSVLRVFSNDKIQAANIINTMTPGDVYQTLTTRHPSAESRRYLYKVNTAQKSYRRR.

A signal peptide spans 1 to 16 (MKKYLALALIAPLLIS). C17 is lipidated: N-palmitoyl cysteine. Residue C17 is the site of S-diacylglycerol cysteine attachment.

This sequence belongs to the transglycosylase Slt family.

The protein localises to the cell outer membrane. The enzyme catalyses Exolytic cleavage of the (1-&gt;4)-beta-glycosidic linkage between N-acetylmuramic acid (MurNAc) and N-acetylglucosamine (GlcNAc) residues in peptidoglycan, from either the reducing or the non-reducing ends of the peptidoglycan chains, with concomitant formation of a 1,6-anhydrobond in the MurNAc residue.. Functionally, murein-degrading enzyme. May play a role in recycling of muropeptides during cell elongation and/or cell division. The sequence is that of Membrane-bound lytic murein transglycosylase C from Escherichia coli O81 (strain ED1a).